A 235-amino-acid chain; its full sequence is Class A basic helix-loop-helix protein 9 (235 aa).

Disordered regions lie at residues 1–69 (MLRG…RRMA) and 132–235 (GHLE…HPRS). Residues 55–67 (RRRARPVRSKARR) show a composition bias toward basic residues. The bHLH domain maps to 65 to 117 (ARRMAANVRERKRILDYNEAFNALRRALRHDLGGKRLSKIATLRRAIHRIAAL).

In terms of assembly, heterodimer. Efficient DNA binding requires dimerization with another bHLH protein. Interacts with TCF3, TCF4, and TCF12.

It is found in the nucleus. It localises to the cytoplasm. Transcription factor, which play a role in limb development. Is an essential player in the regulatory network governing transcription of genes implicated in limb morphogenesis. The sequence is that of Class A basic helix-loop-helix protein 9 (BHLHA9) from Homo sapiens (Human).